Consider the following 387-residue polypeptide: 2-deoxystreptamine glucosyltransferase (387 aa).

This sequence belongs to the glycosyltransferase group 1 family.

The catalysed reaction is 2-deoxystreptamine + UDP-N-acetyl-alpha-D-glucosamine = 2'-N-acetylparomamine + UDP + H(+). The enzyme catalyses 2-deoxystreptamine + UDP-alpha-D-glucose = 2'-deamino-2'-hydroxyparomamine + UDP + H(+). It participates in antibiotic biosynthesis; kanamycin biosynthesis. Glycosyltransferase involved in the biosynthesis of kanamycin by mediating conversion of 2-deoxystreptamine (2-DOS) to 2'-N-acetylparomamine using UDP-alpha-D-glucose as sugar donor. Can also accept UDP-alpha-D-glucosamine, but with a much lower activity compared to UDP-alpha-D-glucose. The protein is 2-deoxystreptamine glucosyltransferase (kanF) of Streptomyces kanamyceticus.